Reading from the N-terminus, the 422-residue chain is UDP-N-acetylglucosamine 1-carboxyvinyltransferase (422 aa).

Residue 22–23 (KN) coordinates phosphoenolpyruvate. Position 95 (Arg95) interacts with UDP-N-acetyl-alpha-D-glucosamine. Cys119 acts as the Proton donor in catalysis. Cys119 is modified (2-(S-cysteinyl)pyruvic acid O-phosphothioketal). UDP-N-acetyl-alpha-D-glucosamine is bound by residues 124 to 128 (RPIDQ), Asp309, and Val331.

This sequence belongs to the EPSP synthase family. MurA subfamily.

It is found in the cytoplasm. It carries out the reaction phosphoenolpyruvate + UDP-N-acetyl-alpha-D-glucosamine = UDP-N-acetyl-3-O-(1-carboxyvinyl)-alpha-D-glucosamine + phosphate. Its pathway is cell wall biogenesis; peptidoglycan biosynthesis. In terms of biological role, cell wall formation. Adds enolpyruvyl to UDP-N-acetylglucosamine. This chain is UDP-N-acetylglucosamine 1-carboxyvinyltransferase, found in Anaeromyxobacter dehalogenans (strain 2CP-1 / ATCC BAA-258).